The following is a 338-amino-acid chain: Acyl-CoA Delta(11) desaturase (338 aa).

2 helical membrane-spanning segments follow: residues 33 to 53 (IVYF…YGLY) and 61 to 81 (WATV…VTAG). The Histidine box-1 signature appears at 83–88 (HRLWSH). The helical transmembrane segment at 97–117 (LQILLMVMNSLAFQNTVIDWV) threads the bilayer. The short motif at 120-124 (HRLHH) is the Histidine box-2 element. A run of 2 helical transmembrane segments spans residues 181-201 (AIPF…VYGW) and 212-234 (AMLR…HIYG). The short motif at 260–264 (HNYHH) is the Histidine box-3 element. Residues 318 to 338 (TNLWGLEDVDTPEDLKNTKGE) form a disordered region.

Belongs to the fatty acid desaturase type 1 family. Requires Fe cation as cofactor. In terms of tissue distribution, detected in the pheromone gland.

It localises to the membrane. The catalysed reaction is an 11,12-saturated fatty acyl-CoA + 2 Fe(II)-[cytochrome b5] + O2 + 2 H(+) = an (11Z)-Delta(11)-fatty acyl-CoA + 2 Fe(III)-[cytochrome b5] + 2 H2O. Catalyzes the formation of delta(11) fatty acyl precursors in the pheromone gland, and has high activity towards palmitic acid and stearic acid. The sequence is that of Acyl-CoA Delta(11) desaturase from Spodoptera littoralis (Egyptian cotton leafworm).